We begin with the raw amino-acid sequence, 8081 residues long: Muscle M-line assembly protein unc-89 (8081 aa).

Residues 24–57 (DVNYSTHSSRSSYRSESLTSRTDGRGRSTSSEII) form a disordered region. Over residues 28–54 (STHSSRSSYRSESLTSRTDGRGRSTSS) the composition is skewed to low complexity. The SH3 domain occupies 63 to 127 (RSYPVYIAIQ…PGSYFETPTE (65 aa)). A DH domain is found at 152-330 (KRDQVYHELL…TTIPQRVHDL (179 aa)). One can recognise a PH domain in the interval 342–498 (DTGKLGRIIR…WSGSRKSSLF (157 aa)). Over residues 479 to 495 (ASDQQSEFSEWSGSRKS) the composition is skewed to polar residues. The segment at 479 to 531 (ASDQQSEFSEWSGSRKSSLFPGPEEGGPPRKKVKSPPVISPTGSSTSIYSGGS) is disordered. Over residues 518-531 (SPTGSSTSIYSGGS) the composition is skewed to low complexity. 6 Ig-like C2-type domains span residues 547-633 (GTRV…ASTS), 648-736 (PAFV…AELF), 748-838 (PEFQ…LKVR), 946-1033 (PTFL…ARLV), 1044-1132 (PKFV…AKLT), and 1140-1227 (PEFD…NTLG). An intrachain disulfide couples Cys568 to Cys621. Composition is skewed to low complexity over residues 1283–1303 (STKT…GVTV) and 1326–1335 (EGSISVSKIE). A disordered region spans residues 1283–1892 (STKTTTMSTT…PAPKLTRDLK (610 aa)). Composition is skewed to basic and acidic residues over residues 1336–1351 (VVSK…EGTP), 1361–1446 (ELPK…KEKS), 1453–1490 (KTGD…EKSP), 1515–1585 (MTHE…KSPE), 1592–1832 (KKSE…KEKS), and 1839–1857 (KTGD…EKPK). RCSD domains are found at residues 1375 to 1475 (KSPS…KSPE), 1479 to 1585 (DVKS…KSPE), 1597 to 1695 (EVKS…KSPQ), and 1700 to 1799 (KPAS…KSPE). Pro residues predominate over residues 1858-1868 (SPTPKKSPPGS). Residues 1875 to 1892 (KSPEAEKPPAPKLTRDLK) are compositionally biased toward basic and acidic residues. 41 consecutive Ig-like C2-type domains span residues 1982–2067 (PEFT…AQLT), 2071–2163 (PSTT…ADLK), 2171–2261 (PKFK…AKVT), 2269–2359 (PEFV…AQLK), 2367–2455 (PKFT…VQLA), 2463–2564 (PTFA…AKPA), 2563–2651 (PAFQ…GPLK), 2657–2746 (PVEF…ATLL), 2754–2858 (PDFL…SEAQ), 2887–2980 (PKFI…ATLT), 2994–3081 (PEFI…AFLT), 3087–3183 (PVFT…SKIT), 3189–3280 (PVFE…AEVT), 3286–3376 (PTFV…ANFA), 3384–3469 (PEFV…EALT), 3482–3572 (PEFT…ANMA), 3580–3667 (PLFV…ETVG), 3686–3777 (PLFI…LKIQ), 3817–3908 (PEFV…IIVT), 3920–4009 (PDFL…VTLT), 4018–4106 (PGFF…VPLT), 4109–4201 (PSET…ATVT), 4212–4297 (PSFK…AKVN), 4302–4387 (PEIV…AALT), 4400–4485 (PEIV…AALT), 4489–4580 (PGIA…CALT), 4588–4678 (PKII…GKIT), 4681–4771 (PKIT…AQLT), 4873–4961 (PEIV…AALT), 4965–5057 (PNVL…GSVV), 5067–5160 (PTSG…CKVT), 5171–5260 (PKFV…CEFQ), 5277–5366 (PRFN…ATYQ), 5383–5472 (PKIN…CSVN), 5487–5578 (PFFT…AHVQ), 5595–5685 (PKFI…SFVR), 5701–5790 (PRFT…GTAT), 5815–5904 (PKLM…CDVN), 5925–6014 (PGFT…AELV), 6038–6130 (PRIR…GSLN), and 6150–6239 (PGFV…AVLD). Cysteines 2582 and 2635 form a disulfide. 2 disulfide bridges follow: Cys2908–Cys2964 and Cys3015–Cys3065. Cystine bridges form between Cys3707–Cys3759 and Cys3838–Cys3890. The interval 4525–4553 (KNGKEITPSDKAQPGSDGDNKPQLVIPDA) is disordered. 4 cysteine pairs are disulfide-bonded: Cys5298-Cys5350, Cys5404-Cys5456, Cys5508-Cys5560, and Cys5616-Cys5669. 2 disulfide bridges follow: Cys5836–Cys5888 and Cys5946–Cys5998. Residues 6278–6374 (PDRGPFIKEV…SPPSRLMAPP (97 aa)) enclose the Fibronectin type-III 1 domain. Ig-like C2-type domains follow at residues 6413–6502 (PGVV…IMVD) and 6507–6596 (PNFI…CTVT). The Protein kinase 1 domain occupies 6592 to 6878 (SCTVTVEAEG…VDEALDHPWI (287 aa)). Disordered regions lie at residues 6954-7130 (KKPP…QQKI), 7177-7217 (QVEA…PQPQ), 7284-7311 (PAIN…LSPR), 7324-7343 (RGKP…DDED), and 7348-7372 (DRKK…ERLE). A compositionally biased stretch (pro residues) spans 6999-7009 (RQPPQIPPQPQ). Residues 7087 to 7110 (LEKRKLIPQDKGETPSHSKKEKTQ) show a composition bias toward basic and acidic residues. Positions 7200–7215 (KPTPSPTSPQKSPVPQ) are enriched in pro residues. The segment covering 7284–7302 (PAINLSPNPKSPRRSTPGT) has biased composition (polar residues). The region spanning 7528 to 7617 (PIFTARLRDV…TDKSSCRLIS (90 aa)) is the Ig-like C2-type 50 domain. A disulfide bridge links Cys7549 with Cys7600. Residues 7623 to 7721 (RPGRPEAELS…SSRIVQTHGK (99 aa)) enclose the Fibronectin type-III 2 domain. The interval 7746 to 7773 (STNQLGGISEESEEDSEARTANEDMKSN) is disordered. The span at 7762 to 7771 (EARTANEDMK) shows a compositional bias: basic and acidic residues. Residues 7785–8035 (FQIGGLKFKG…TDEALSHKFL (251 aa)) form the Protein kinase 2 domain.

It belongs to the protein kinase superfamily. CAMK Ser/Thr protein kinase family. May interact (via fibronectin type-III domain 1, Ig-like C2-type domain 48/49 and protein kinase domain 1 or C-terminus of the interkinase region) with lim-9 (via LIM zinc-binding domain). May interact (via fibronectin type-III domain 1, Ig-like C2-type domain 48/49 and kinase protein domain 1 or Ig-like C2-type domain 50, fibronectin type-III domain 2 and kinase protein domain 2) with scpl-1 isoforms a and b (via FCP1 homology domain); the interaction may act as a molecular bridge to bring two unc-89 molecules together or to stabilize a loop between the 2 kinase domains. May interact (via SH3 domain) with unc-15. May interact (via Ig-like C2-type domain 1-3) with cpna-1 (via VWFA domain). May interact (via Ig-like C2-type domain 2/3 and, Ig-like C2-type domain 50 and fibronectin type-III domain 2) with mel-26 (via MATH domain). May interact (via DH and PH domains) with rho-1, ced-10, mig-2 and cdc-42. As to expression, expressed in body-wall, pharyngeal muscles and a few muscle cells of the tail (at protein level). Expressed in gonadal myoepithelial sheath cells (at protein level). Isoform c: Expressed in body wall and vulval muscles but not in pharyngeal muscles. Isoform d: Specifically expressed in vulval, intestinal, anal depressor and anal sphincter muscles.

The protein resides in the cytoplasm. The protein localises to the myofibril. It is found in the sarcomere. Its subcellular location is the m line. Structural component of the muscle M line which is involved in assembly and organization of sarcomere myofilaments. The large isoform a, isoform b, isoform d and isoform f play an essential role in maintaining the organization of sarcomeres but not myofilament alignment during body wall muscle development whereas the small isoform c and isoform d appear to have a minor role. Isoform b and isoform f are required for the organization of unc-15/paramyosin into sarcomere thick filaments in body wall muscles. By binding mel-26, a substrate adapter of the cul-3 E3 ubiquitin-protein ligase complex, regulates the organization of myosin thick filaments, likely by preventing the degradation of microtubule severing protein mei-1. Acts as a guanine nucleotide exchange factor (GEF) for Rho GTPase rho-1 but not ced-10, mig-2 and cdc-42. The large isoforms regulate Ca(2+) signaling during muscle contraction by ensuring the correct localization of sarco-endoplamic reticulum Ca(2+) ATPase sca-1 and ryanodine receptor unc-68. By controlling the contraction and/or organization of pharyngeal muscles, plays a role in the formation of pharyngeal gland cell extension. This is Muscle M-line assembly protein unc-89 (unc-89) from Caenorhabditis elegans.